We begin with the raw amino-acid sequence, 261 residues long: MATQDSEVALVTGATSGIGLEIARRLGKEGLRVFVCARGEEGLRTTLKELREAGVEADGRTCDVRSVPEIEALVAAVVERYGPVDVLVNNAGRPGGGATAELADELWLDVVETNLTGVFRVTKQVLKAGGMLERGTGRIVNIASTGGKQGVVHAAPYSASKHGVVGFTKALGLELARTGITVNAVCPGFVETPMAASVREHYSDIWEVSTEEAFDRITARVPIGRYVQPSEVAEMVAYLIGPGAAAVTAQALNVCGGLGNY.

The NADP(+) site is built by T15, S16, I18, R38, G39, D63, V64, N90, Y157, K161, V190, and T192. Y157 (proton acceptor) is an active-site residue.

The protein belongs to the short-chain dehydrogenases/reductases (SDR) family. In terms of assembly, homotetramer.

It participates in antibiotic biosynthesis; actinorhodin biosynthesis. The protein is Putative ketoacyl reductase (actIII) of Streptomyces coelicolor (strain ATCC BAA-471 / A3(2) / M145).